A 384-amino-acid polypeptide reads, in one-letter code: Glucans biosynthesis protein C (384 aa).

10 helical membrane-spanning segments follow: residues 17–37, 54–74, 91–111, 140–160, 173–193, 212–232, 240–260, 274–294, 311–331, and 338–358; these read AWLM…THSW, FIHA…SYML, VGIP…ILLQ, LWFL…FTWF, AISL…YAAI, FIVM…LAFI, FTTP…AYLL, TESV…FSLG, ASLF…AYIT, and LIGF…LYEI.

It belongs to the acyltransferase 3 family. OpgC subfamily.

It is found in the cell membrane. Its pathway is glycan metabolism; osmoregulated periplasmic glucan (OPG) biosynthesis. Its function is as follows. Necessary for the succinyl substitution of periplasmic glucans. Could catalyze the transfer of succinyl residues from the cytoplasmic side of the membrane to the nascent glucan backbones on the periplasmic side of the membrane. This chain is Glucans biosynthesis protein C, found in Salmonella choleraesuis (strain SC-B67).